The chain runs to 799 residues: Cadherin-8 (799 aa).

Residues 1 to 29 form the signal peptide; the sequence is MPERLAETLLDLWTPLIILWITLPSFVYM. Residues 30-61 constitute a propeptide that is removed on maturation; sequence APMNQAHVLTTGSPLELSRQSEEMRILNRSKR. 5 consecutive Cadherin domains span residues 62–167, 168–276, 277–391, 392–494, and 495–616; these read GWVW…APEF, LNGP…PPKF, AQSL…PPVF, SSPT…DNAP, and EFAS…YVLP. Topologically, residues 62–621 are extracellular; that stretch reads GWVWNQMFVL…PYVLPIGLSM (560 aa). The N-linked (GlcNAc...) asparagine glycan is linked to Asn-188. Residues Asn-463, Asn-473, and Asn-544 are each glycosylated (N-linked (GlcNAc...) asparagine). The chain crosses the membrane as a helical span at residues 622–642; the sequence is GALIAILACIILLLVIVVLFV. The Cytoplasmic segment spans residues 643-799; the sequence is TLRRHKNEPL…YSVGESDKET (157 aa). Residue Ser-795 is modified to Phosphoserine.

The protein resides in the cell membrane. Its function is as follows. Cadherins are calcium-dependent cell adhesion proteins. They preferentially interact with themselves in a homophilic manner in connecting cells; cadherins may thus contribute to the sorting of heterogeneous cell types. This Rattus norvegicus (Rat) protein is Cadherin-8 (Cdh8).